Consider the following 118-residue polypeptide: Small ribosomal subunit protein uS13 (118 aa).

Residues 94–118 (SLPLRGQRTKTNARTRKGPRKPIKK) form a disordered region.

This sequence belongs to the universal ribosomal protein uS13 family. As to quaternary structure, part of the 30S ribosomal subunit. Forms a loose heterodimer with protein S19. Forms two bridges to the 50S subunit in the 70S ribosome.

In terms of biological role, located at the top of the head of the 30S subunit, it contacts several helices of the 16S rRNA. In the 70S ribosome it contacts the 23S rRNA (bridge B1a) and protein L5 of the 50S subunit (bridge B1b), connecting the 2 subunits; these bridges are implicated in subunit movement. Contacts the tRNAs in the A and P-sites. In Vibrio vulnificus (strain CMCP6), this protein is Small ribosomal subunit protein uS13.